The following is a 132-amino-acid chain: Small ribosomal subunit protein uS9 (132 aa).

Residues 100-132 are disordered; sequence LKSNGLLTRDDRTKERKKPGLKRARKAPQYTKR. Over residues 114–132 the composition is skewed to basic residues; the sequence is ERKKPGLKRARKAPQYTKR.

The protein belongs to the universal ribosomal protein uS9 family.

This Dehalococcoides mccartyi (strain ATCC BAA-2266 / KCTC 15142 / 195) (Dehalococcoides ethenogenes (strain 195)) protein is Small ribosomal subunit protein uS9.